Consider the following 84-residue polypeptide: Large ribosomal subunit protein bL27 (84 aa).

A disordered region spans residues 1-22 (MAKTKAGGSTKNGRDSAGRRLG).

It belongs to the bacterial ribosomal protein bL27 family.

The chain is Large ribosomal subunit protein bL27 from Mesomycoplasma hyopneumoniae (strain 232) (Mycoplasma hyopneumoniae).